Here is a 146-residue protein sequence, read N- to C-terminus: Hut operon positive regulatory protein (146 aa).

It belongs to the HutP family. Homohexamer.

In terms of biological role, antiterminator that binds to cis-acting regulatory sequences on the mRNA in the presence of histidine, thereby suppressing transcription termination and activating the hut operon for histidine utilization. In Bacillus anthracis (strain CDC 684 / NRRL 3495), this protein is Hut operon positive regulatory protein.